The primary structure comprises 196 residues: ATP-dependent Clp protease proteolytic subunit (196 aa).

Catalysis depends on Ser98, which acts as the Nucleophile. His123 is an active-site residue.

The protein belongs to the peptidase S14 family. As to quaternary structure, fourteen ClpP subunits assemble into 2 heptameric rings which stack back to back to give a disk-like structure with a central cavity, resembling the structure of eukaryotic proteasomes.

The protein resides in the cytoplasm. It carries out the reaction Hydrolysis of proteins to small peptides in the presence of ATP and magnesium. alpha-casein is the usual test substrate. In the absence of ATP, only oligopeptides shorter than five residues are hydrolyzed (such as succinyl-Leu-Tyr-|-NHMec, and Leu-Tyr-Leu-|-Tyr-Trp, in which cleavage of the -Tyr-|-Leu- and -Tyr-|-Trp bonds also occurs).. Its function is as follows. Cleaves peptides in various proteins in a process that requires ATP hydrolysis. Has a chymotrypsin-like activity. Plays a major role in the degradation of misfolded proteins. The chain is ATP-dependent Clp protease proteolytic subunit from Actinobacillus pleuropneumoniae serotype 7 (strain AP76).